Consider the following 793-residue polypeptide: Ent-copalyl diphosphate synthase, chloroplastic (793 aa).

Residues 1–47 constitute a chloroplast transit peptide; sequence MPLASNPVAFLPSSTAHGDLPAAAFSRSSAGCLQLCRPLTPTSSLQC. The Mg(2+) site is built by D372 and D374. Residues 372 to 375 carry the DXDD motif motif; the sequence is DIDD.

This sequence belongs to the terpene synthase family. Requires Mg(2+) as cofactor.

Its subcellular location is the plastid. The protein localises to the chloroplast. It carries out the reaction (2E,6E,10E)-geranylgeranyl diphosphate = ent-copalyl diphosphate. It participates in plant hormone biosynthesis; gibberellin biosynthesis. In terms of biological role, catalyzes the conversion of geranylgeranyl diphosphate (GGPP) to the gibberellin precursor ent-copalyl diphosphate (CPP). The sequence is that of Ent-copalyl diphosphate synthase, chloroplastic from Salvia miltiorrhiza (Chinese sage).